We begin with the raw amino-acid sequence, 146 residues long: Hemoglobin subunit beta-2 (146 aa).

The region spanning 2 to 146 is the Globin domain; it reads GLTAHEKQLI…IADALGKGYH (145 aa). Heme b is bound by residues His63 and His92.

It belongs to the globin family. In terms of assembly, heterotetramer of two alpha chains and two beta chains. In terms of tissue distribution, red blood cells.

Involved in oxygen transport from the lung to the various peripheral tissues. The chain is Hemoglobin subunit beta-2 (hbb2) from Xenopus borealis (Kenyan clawed frog).